The chain runs to 320 residues: Protoheme IX farnesyltransferase 1 (320 aa).

9 consecutive transmembrane segments (helical) span residues 34–54, 58–78, 112–132, 135–155, 160–180, 189–209, 234–254, 255–275, and 299–319; these read GIII…FASA, LTGL…AFVM, AMIL…LYSL, LTAF…TVWV, VWST…GYCA, AVLL…AIGI, IKMM…PFSL, GTGH…GIWI, and LIYF…MFLI.

Belongs to the UbiA prenyltransferase family. Protoheme IX farnesyltransferase subfamily. In terms of assembly, interacts with CtaA.

The protein localises to the cell membrane. It carries out the reaction heme b + (2E,6E)-farnesyl diphosphate + H2O = Fe(II)-heme o + diphosphate. Its pathway is porphyrin-containing compound metabolism; heme O biosynthesis; heme O from protoheme: step 1/1. In terms of biological role, converts heme B (protoheme IX) to heme O by substitution of the vinyl group on carbon 2 of heme B porphyrin ring with a hydroxyethyl farnesyl side group. The protein is Protoheme IX farnesyltransferase 1 (ctaB1) of Bacillus subtilis (strain 168).